Reading from the N-terminus, the 1664-residue chain is MATDGASCEPDLSRAPEDAAGAAAEAAKKEFDVDTLSKSELRMLLSVMEGELEARDLVIEALRARRKEVFIQERYGRFNLNDPFLALQRDYEAGASDKEKKPVCTNPLSILEAVMAHCRKMQERMSTQLAAAESRQKKLEMEKLQLQALDQEHQKLAARLEEERGKNRHVVLMLVKECKQLSGKVIEEAQKLEEVMASLEEEKKKTNDLEEQLCTEKRRSAEMEAQMEKQLSEFDTEREQLRAKLNREEAHTTDLKEEIDKMKKMIEQLKRGSDSKPSLSLPRKTKDRRLASVSVATEGPVTRAVACQTDPVTESTDHVRKLPLTVPAKPSAGSPLVSANTKGNVCPHAAPGRPGMDRQASHGDLMGSSAPTIPAASASRMEANGPSPGSTPDLTSSTPPIPSGTTPAPAHAPGVATQSPVPAAPGHGLHSPCATTALHPGLNPRIQAARFRFQGNANDPDQNGNTTQSPPSRDVSPTSRDNLVAKQLARNTVTQALSRFTSPQVGTPPRPGVPPTGDVATHPPVSRSGLKTPGGARVDRGNPPPIPPKKPGLSQTPSPPHPQLKIPVDSSRASSAGAKVENKTVASPPSSLPPGSRVITEENPPKSSSPQLPPKPSIELTVAPAGCAVSALAASQVGAWPAETLGLKPPACSDSSLVIPNTIAFRSSINPVSASTSRPGASDSLLVTASGWSPSLTPLLMSGGPAPLAGRPTLLQQAAAQGNVTLLSMLLNEEGLDTNYSCEDGHSALYSAATNGHADCVRLLLNAEAQVNAAEKNGFTPLCAAAAQGHFECLELLLASDADVNHAADGGQTPLYLACKNGNTDCIKLLLEAGTDRSIKTRDGWTPVHAAVDTGNVDSLKLLMYYQAPARGNSSNEEEPESGAFARDGGEESSEGTSEPVVSADLINHADREGWTAAHIAASKGFKNCLEILCRHGGLEPEKRDKCNRTVHDVATDDCKHLLENLNALKIPLRISVGEIQPDNCGSDDFECENIICTLSIRKQTSWDDFSKAVSQALTNHFQAISSDGWWSLEDVAFNNTTDSSIGLSASSVRSITLGNMPWPAGRSFAPSPWDFVRKNKTEQVTALLSGPQEGCLSSVTYASMIPLKTLQNYLRLVEQYHNVIFHGPEGSLQDFIAHQLALCMKHRQMAAGFSCEIVRAEVDAGFSKEQLLDLFISSACLIPVKQSPVKKKIIIILENLENSSLSELLGDFLAPLENRSTESPCTFQKGNGASECYYFHENCFLMGTIAKACLQGSDLLVQQHFRWVQLRWDGEPMQGLLPRFLRRKVVNKFRGQVPAPCDPVHKTVAWALSVWRQLNSCLAHLGTPEALLGPKYFLSCPVVPGRAQATVKWMSKLWNAVIAPRVQAAILSRASVKRQPGLGQTAAKKHPSHGQQAVVKAALSILLNKAVLHGCPLPRAELDQHTADFRGGSFPLSIVSSYNSCSKKKGESGAWRKVSTSPRKKSGRFSSPIWNEPDLSPGGIKNKAISQLNCGRNTSLSKQKSLENELSLTLNLDQRFSLGSDDAADLVKELQSMCSSKSESDLSKIADSREELRTFHSSGSNPAFSAPVNNPRMPVAPKEVSPLSSHQATECSTSKSKTELGVSRVKSFLPVPRSKIAQCSQNTKRSSSSSNTRQPEINNNSKEENWNLHKHEQVEKPNT.

Disordered regions lie at residues 1–23, 268–440, 455–479, and 495–618; these read MATDGASCEPDLSRAPEDAAGAA, QLKR…ALHP, GNANDPDQNGNTTQSPPSRDVSPTS, and QALS…KPSI. A coiled-coil region spans residues 119 to 276; sequence RKMQERMSTQ…EQLKRGSDSK (158 aa). Composition is skewed to low complexity over residues 368–379 and 395–407; these read SSAPTIPAASAS and TSSTPPIPSGTTP. Arginine 499 carries the asymmetric dimethylarginine modification. 6 ANK repeats span residues 710 to 740, 744 to 773, 777 to 806, 810 to 839, 843 to 872, and 913 to 943; these read GRPTLLQQAAAQGNVTLLSMLLNEEGLDTNY, DGHSALYSAATNGHADCVRLLLNAEAQVNA, NGFTPLCAAAAQGHFECLELLLASDADVNH, GGQTPLYLACKNGNTDCIKLLLEAGTDRSI, DGWTPVHAAVDTGNVDSLKLLMYYQAPARG, and EGWTAAHIAASKGFKNCLEILCRHGGLEPEK. Residues 871 to 900 form a disordered region; sequence RGNSSNEEEPESGAFARDGGEESSEGTSEP. Residues 1447-1483 are disordered; that stretch reads SKKKGESGAWRKVSTSPRKKSGRFSSPIWNEPDLSPG. Serine 1525 carries the post-translational modification Phosphoserine. The interval 1558–1664 is disordered; it reads RTFHSSGSNP…KHEQVEKPNT (107 aa). Positions 1587–1600 are enriched in polar residues; the sequence is PLSSHQATECSTSK. The segment covering 1625-1639 has biased composition (low complexity); the sequence is SQNTKRSSSSSNTRQ. Positions 1646–1664 are enriched in basic and acidic residues; sequence SKEENWNLHKHEQVEKPNT.

Interacts with CTTN/cortactin SH3 domain. Interacts with STRN, STRN4/zinedin and MOB4/phocein; this interactions mediate the association with the STRIPAK core complex and may regulate dendritic spine distribution of the STRIPAK complex in hippocampal neurons. Activation of glutamate receptors weakens the interaction with STRN and STRN4.

The protein resides in the cytoplasm. It localises to the cell cortex. Its subcellular location is the cell projection. The protein localises to the dendritic spine. Regulates the dendritic spine distribution of CTTN/cortactin in hippocampal neurons, and thus controls dendritic spinogenesis and dendritic spine maintenance. Associates with the striatin-interacting phosphatase and kinase (STRIPAK) core complex to regulate dendritic spine distribution of the STRIPAK complex in hippocampal neurons. The chain is Cortactin-binding protein 2 (CTTNBP2) from Oryctolagus cuniculus (Rabbit).